We begin with the raw amino-acid sequence, 300 residues long: Cation-efflux pump FieF (300 aa).

The next 4 helical transmembrane spans lie at Ala12–Trp32, Ile39–Val59, Ala82–Ile102, and Pro114–Phe134. Residues Asp45 and Asp49 each coordinate Zn(2+). Positions 153 and 157 each coordinate Zn(2+). 2 helical membrane passes run Ser156–His176 and Ala178–Gly198.

Belongs to the cation diffusion facilitator (CDF) transporter (TC 2.A.4) family. FieF subfamily. As to quaternary structure, homodimer.

It localises to the cell inner membrane. The enzyme catalyses Zn(2+)(in) + H(+)(out) = Zn(2+)(out) + H(+)(in). It catalyses the reaction Cd(2+)(in) + H(+)(out) = Cd(2+)(out) + H(+)(in). The catalysed reaction is Fe(2+)(in) + H(+)(out) = Fe(2+)(out) + H(+)(in). In terms of biological role, divalent metal cation transporter which exports Zn(2+), Cd(2+) and possibly Fe(2+). May be involved in zinc and iron detoxification by efflux. In Shigella boydii serotype 18 (strain CDC 3083-94 / BS512), this protein is Cation-efflux pump FieF.